A 138-amino-acid polypeptide reads, in one-letter code: Acidic phospholipase A2 Cvv-E6b (138 aa).

The first 16 residues, 1-16, serve as a signal peptide directing secretion; that stretch reads MRTLWILAVLLLGVEG. 7 disulfide bridges follow: Cys42–Cys131, Cys44–Cys60, Cys59–Cys111, Cys65–Cys138, Cys66–Cys104, Cys73–Cys97, and Cys91–Cys102. Residues Tyr43, Gly45, and Gly47 each contribute to the Ca(2+) site. The active site involves His63. Asp64 is a binding site for Ca(2+). Asp105 is an active-site residue.

Requires Ca(2+) as cofactor. As to expression, expressed by the venom gland.

The protein localises to the secreted. The catalysed reaction is a 1,2-diacyl-sn-glycero-3-phosphocholine + H2O = a 1-acyl-sn-glycero-3-phosphocholine + a fatty acid + H(+). In terms of biological role, snake venom phospholipase A2 (PLA2) that shows very low inhibition of ADP-induced platelet aggregation in platelet-rich plasma of human, rabbit and guinea pig. PLA2 catalyzes the calcium-dependent hydrolysis of the 2-acyl groups in 3-sn-phosphoglycerides. The chain is Acidic phospholipase A2 Cvv-E6b from Crotalus viridis viridis (Prairie rattlesnake).